Here is an 83-residue protein sequence, read N- to C-terminus: Large ribosomal subunit protein bL31B (83 aa).

Belongs to the bacterial ribosomal protein bL31 family. Type B subfamily. In terms of assembly, part of the 50S ribosomal subunit.

The polypeptide is Large ribosomal subunit protein bL31B (Lactobacillus johnsonii (strain CNCM I-12250 / La1 / NCC 533)).